We begin with the raw amino-acid sequence, 98 residues long: NADH-ubiquinone oxidoreductase chain 4L (98 aa).

A run of 3 helical transmembrane segments spans residues 1-21, 28-48, and 59-79; these read MAPINLNLILAFSLALLGVLI, STLLCLEGMMLSLFILMTLLI, and APLILLVFSACEAGVGLALLV.

This sequence belongs to the complex I subunit 4L family. Core subunit of respiratory chain NADH dehydrogenase (Complex I) which is composed of 45 different subunits.

It is found in the mitochondrion inner membrane. The catalysed reaction is a ubiquinone + NADH + 5 H(+)(in) = a ubiquinol + NAD(+) + 4 H(+)(out). Its function is as follows. Core subunit of the mitochondrial membrane respiratory chain NADH dehydrogenase (Complex I) which catalyzes electron transfer from NADH through the respiratory chain, using ubiquinone as an electron acceptor. Part of the enzyme membrane arm which is embedded in the lipid bilayer and involved in proton translocation. The sequence is that of NADH-ubiquinone oxidoreductase chain 4L (MT-ND4L) from Isoodon macrourus (Short-nosed bandicoot).